Consider the following 88-residue polypeptide: Large ribosomal subunit protein eL31 (88 aa).

The protein belongs to the eukaryotic ribosomal protein eL31 family.

This is Large ribosomal subunit protein eL31 from Saccharolobus islandicus (strain Y.N.15.51 / Yellowstone #2) (Sulfolobus islandicus).